A 442-amino-acid polypeptide reads, in one-letter code: Chromosomal replication initiator protein DnaA (442 aa).

Residues 1–75 (MDAWPRCLER…GNGEVALAVG (75 aa)) are domain I, interacts with DnaA modulators. The interval 75-104 (GSRPRAPEPLPAPQAVASAPAAAPIVPFAG) is domain II. Residues 105–322 (NLDSHYTFAN…GALNTLVARA (218 aa)) are domain III, AAA+ region. Positions 150, 152, 153, and 154 each coordinate ATP. The domain IV, binds dsDNA stretch occupies residues 323–442 (NFTGRSITVE…WEKLIRKLSE (120 aa)).

This sequence belongs to the DnaA family. In terms of assembly, oligomerizes as a right-handed, spiral filament on DNA at oriC.

The protein resides in the cytoplasm. Its function is as follows. Plays an essential role in the initiation and regulation of chromosomal replication. ATP-DnaA binds to the origin of replication (oriC) to initiate formation of the DNA replication initiation complex once per cell cycle. Binds the DnaA box (a 9 base pair repeat at the origin) and separates the double-stranded (ds)DNA. Forms a right-handed helical filament on oriC DNA; dsDNA binds to the exterior of the filament while single-stranded (ss)DNA is stabiized in the filament's interior. The ATP-DnaA-oriC complex binds and stabilizes one strand of the AT-rich DNA unwinding element (DUE), permitting loading of DNA polymerase. After initiation quickly degrades to an ADP-DnaA complex that is not apt for DNA replication. Binds acidic phospholipids. This Xanthomonas campestris pv. campestris (strain B100) protein is Chromosomal replication initiator protein DnaA.